We begin with the raw amino-acid sequence, 435 residues long: MSKFVVKPTNSLSGCLKVPGDKSISHRSIMLGSLANGVTKISGFLEGEDTLSTLKAFQDMGVKIEYNGDNVTIYGVGLNGLKKPLTPLDLGNSGTSIRLISGILAAQKFDSELCGDESLSKRPMGRVINPLTKMGAMIESNNGKLPLKIKGGQALNGIHYDLLVASAQVKSCVLLAGLYAKGETCIKELAPTRDHTERMLKGFGYKIDVNKNKICLIGGTQLNAFAIQVPSDISSAAFFMVAASIAPKADITLTGVNINPTRIGVIDILKLMGANLSLSNEREIGGELLADIRIQSEQLKGIRIPEELVSLAIDELPVIFIAASCAKGETILTDAKELRVKESDRIQVMADGLSILGIKNEVLEDGIKIQGGVFSKPGIVIESHHDHRISMSFAIASLRCQYIIEIEDVDNVKTSFPNFVELANQIGMNINLVNS.

The 3-phosphoshikimate site is built by K22, S23, and R27. K22 serves as a coordination point for phosphoenolpyruvate. Phosphoenolpyruvate-binding residues include G94 and R122. The 3-phosphoshikimate site is built by S166, Q168, D314, and K341. Position 168 (Q168) interacts with phosphoenolpyruvate. The Proton acceptor role is filled by D314. The phosphoenolpyruvate site is built by R345 and R388.

It belongs to the EPSP synthase family. As to quaternary structure, monomer.

Its subcellular location is the cytoplasm. The enzyme catalyses 3-phosphoshikimate + phosphoenolpyruvate = 5-O-(1-carboxyvinyl)-3-phosphoshikimate + phosphate. Its pathway is metabolic intermediate biosynthesis; chorismate biosynthesis; chorismate from D-erythrose 4-phosphate and phosphoenolpyruvate: step 6/7. In terms of biological role, catalyzes the transfer of the enolpyruvyl moiety of phosphoenolpyruvate (PEP) to the 5-hydroxyl of shikimate-3-phosphate (S3P) to produce enolpyruvyl shikimate-3-phosphate and inorganic phosphate. The protein is 3-phosphoshikimate 1-carboxyvinyltransferase of Ruthia magnifica subsp. Calyptogena magnifica.